A 40-amino-acid chain; its full sequence is FWGSGPFGMFPGGWGGPWNSPWYGPYGGYPYGGYGYPYGL.

This sequence to C.vinosum CV3. As to quaternary structure, the protein envelope of the sulfur globules is composed of the three different proteins TR0, TR1 and TR2.

Functionally, structural protein of the sulfur globules, which are intracellular globules that serve for sulfur storage in purple sulfur bacteria. This is Sulfur globule protein TR2 from Thiocapsa roseopersicina.